We begin with the raw amino-acid sequence, 172 residues long: DNA-directed RNA polymerase II subunit RPB7 (172 aa).

This sequence belongs to the eukaryotic RPB7/RPC8 RNA polymerase subunit family. Component of the RNA polymerase II (Pol II) core complex consisting of 12 subunits: a ten-subunit catalytic core composed of POLR2A/RPB1, POLR2B/RPB2, POLR2C/RPB3, POLR2I/RPB9, POLR2J/RPB11, POLR2E/RPABC1, POLR2F/RPABC2, POLR2H/RPABC3, POLR2K/RPABC4 and POLR2L/RPABC5 and a mobile stalk composed of two subunits POLR2D/RPB4 and POLR2G/RPB7, protruding from the core and functioning primarily in transcription initiation. Part of Pol II(G) complex, in which Pol II core associates with an additional subunit POLR2M; unlike conventional Pol II, Pol II(G) functions as a transcriptional repressor. Part of TBP-based Pol II pre-initiation complex (PIC), in which Pol II core assembles with general transcription factors and other specific initiation factors including GTF2E1, GTF2E2, GTF2F1, GTF2F2, TCEA1, ERCC2, ERCC3, GTF2H2, GTF2H3, GTF2H4, GTF2H5, GTF2A1, GTF2A2, GTF2B and TBP; this large multi-subunit PIC complex mediates DNA unwinding and targets Pol II core to the transcription start site where the first phosphodiester bond forms.

It localises to the nucleus. In terms of biological role, core component of RNA polymerase II (Pol II), a DNA-dependent RNA polymerase which synthesizes mRNA precursors and many functional non-coding RNAs using the four ribonucleoside triphosphates as substrates. Pol II is the central component of the basal RNA polymerase II transcription machinery. It is composed of mobile elements that move relative to each other. POLR2G/RPB7 is part of a subcomplex with POLR2D/RPB4 that binds to a pocket formed by POLR2A/RPB1, POLR2B/RPB2 and POLR2F/RPABC2 at the base of the clamp element. The POLR2D/RPB4-POLR2G/RPB7 subcomplex seems to lock the clamp via POLR2G/RPB7 in the closed conformation thus preventing double-stranded DNA to enter the active site cleft. The POLR2D/RPB4-POLR2G/RPB7 subcomplex binds single-stranded DNA and RNA. In Bos taurus (Bovine), this protein is DNA-directed RNA polymerase II subunit RPB7 (POLR2G).